The primary structure comprises 117 residues: Large ribosomal subunit protein bL20c (117 aa).

The protein belongs to the bacterial ribosomal protein bL20 family.

Its subcellular location is the plastid. It localises to the chloroplast. Binds directly to 23S ribosomal RNA and is necessary for the in vitro assembly process of the 50S ribosomal subunit. It is not involved in the protein synthesizing functions of that subunit. This is Large ribosomal subunit protein bL20c (rpl20) from Arabidopsis thaliana (Mouse-ear cress).